We begin with the raw amino-acid sequence, 148 residues long: Deoxyuridine 5'-triphosphate nucleotidohydrolase (148 aa).

Belongs to the dUTPase family. Mg(2+) is required as a cofactor.

It catalyses the reaction dUTP + H2O = dUMP + diphosphate + H(+). It participates in pyrimidine metabolism; dUMP biosynthesis; dUMP from dCTP (dUTP route): step 2/2. Functionally, this enzyme decreases the intracellular concentration of dUTP so that uracil cannot be incorporated into viral progeny DNA. This activity is sufficient to exclude uracil from the DNA during phage replication. In the case of dUTPase mutant phages, the host dUTPase activity is not sufficient to exclude uracil from T5 DNA and uracil are incorporated, leading to decreased phage viability. The protein is Deoxyuridine 5'-triphosphate nucleotidohydrolase (DUT) of Escherichia coli (Enterobacteria phage T5).